We begin with the raw amino-acid sequence, 1230 residues long: Soluble starch synthase 3, chloroplastic/amyloplastic (1230 aa).

A chloroplast-targeting transit peptide spans 1-60 (MDVPFPLHRSLSCTSVSNAITHLKIKPILGFVSHGTTSLSVQSSSWRKDGMVTGVSFSIC). The segment at 66–189 (RRRRKVSTPR…KDAVKLNKSK (124 aa)) is disordered. The segment covering 124–145 (VEARVETSDDDTKGVVRDHKFL) has biased composition (basic and acidic residues). Polar residues predominate over residues 152-170 (NGSTKSISMSPVRVSSQFV). Residues 177–189 (GDDKDAVKLNKSK) show a composition bias toward basic and acidic residues. Lys794 serves as a coordination point for ADP-alpha-D-glucose.

The protein belongs to the glycosyltransferase 1 family. Bacterial/plant glycogen synthase subfamily. In terms of tissue distribution, tuber, sink and source leaves.

It is found in the plastid. Its subcellular location is the chloroplast. It localises to the amyloplast. The catalysed reaction is [(1-&gt;4)-alpha-D-glucosyl](n) + ADP-alpha-D-glucose = [(1-&gt;4)-alpha-D-glucosyl](n+1) + ADP + H(+). It functions in the pathway glycan biosynthesis; starch biosynthesis. Functionally, may account for most of the soluble starch synthase activity in the tubers. Contributes only a tiny percentage of the granule-bound activity, but may also contribute to the deposition of transient starch in chloroplasts of leaves. The sequence is that of Soluble starch synthase 3, chloroplastic/amyloplastic (SS3) from Solanum tuberosum (Potato).